The chain runs to 280 residues: Ribosomal RNA small subunit methyltransferase A (280 aa).

S-adenosyl-L-methionine is bound by residues asparagine 27, leucine 29, glycine 54, glutamate 76, aspartate 102, and asparagine 122.

The protein belongs to the class I-like SAM-binding methyltransferase superfamily. rRNA adenine N(6)-methyltransferase family. RsmA subfamily.

It is found in the cytoplasm. The enzyme catalyses adenosine(1518)/adenosine(1519) in 16S rRNA + 4 S-adenosyl-L-methionine = N(6)-dimethyladenosine(1518)/N(6)-dimethyladenosine(1519) in 16S rRNA + 4 S-adenosyl-L-homocysteine + 4 H(+). Functionally, specifically dimethylates two adjacent adenosines (A1518 and A1519) in the loop of a conserved hairpin near the 3'-end of 16S rRNA in the 30S particle. May play a critical role in biogenesis of 30S subunits. This chain is Ribosomal RNA small subunit methyltransferase A, found in Oleidesulfovibrio alaskensis (strain ATCC BAA-1058 / DSM 17464 / G20) (Desulfovibrio alaskensis).